A 131-amino-acid chain; its full sequence is Large-conductance mechanosensitive channel (131 aa).

Transmembrane regions (helical) follow at residues 14 to 34, 38 to 58, and 67 to 87; these read IMDLAIGVVIGGAFGKIVTSL, IIMPLVGLLLGGLDFSGLAVT, and GSFIQTIVNFFIISFSIFIVI.

Belongs to the MscL family. Homopentamer.

The protein resides in the cell membrane. In terms of biological role, channel that opens in response to stretch forces in the membrane lipid bilayer. May participate in the regulation of osmotic pressure changes within the cell. This Bacillus velezensis (strain DSM 23117 / BGSC 10A6 / LMG 26770 / FZB42) (Bacillus amyloliquefaciens subsp. plantarum) protein is Large-conductance mechanosensitive channel.